A 321-amino-acid polypeptide reads, in one-letter code: Ferredoxin--NADP reductase (321 aa).

The FAD site is built by Glu-33, Gln-41, Tyr-46, Val-86, Leu-119, Asp-277, and Ser-318.

Belongs to the ferredoxin--NADP reductase type 2 family. In terms of assembly, homodimer. The cofactor is FAD.

The enzyme catalyses 2 reduced [2Fe-2S]-[ferredoxin] + NADP(+) + H(+) = 2 oxidized [2Fe-2S]-[ferredoxin] + NADPH. In Lactococcus lactis subsp. cremoris (strain SK11), this protein is Ferredoxin--NADP reductase.